Here is a 182-residue protein sequence, read N- to C-terminus: Large ribosomal subunit protein uL6 (182 aa).

The protein belongs to the universal ribosomal protein uL6 family. Part of the 50S ribosomal subunit.

Functionally, this protein binds to the 23S rRNA, and is important in its secondary structure. It is located near the subunit interface in the base of the L7/L12 stalk, and near the tRNA binding site of the peptidyltransferase center. The sequence is that of Large ribosomal subunit protein uL6 from Pelotomaculum thermopropionicum (strain DSM 13744 / JCM 10971 / SI).